The chain runs to 135 residues: Snaclec echicetin subunit alpha (135 aa).

An N-terminal signal peptide occupies residues 1-4 (GADE). Cystine bridges form between C6–C17, C34–C129, and C104–C121. The region spanning 13–130 (NGVYCYMLFK…CENTFPFMCK (118 aa)) is the C-type lectin domain.

Belongs to the snaclec family. As to quaternary structure, heterodimer of subunits alpha and beta; disulfide-linked. Expressed by the venom gland.

It is found in the secreted. Functionally, binding of echicetin to GPIbalpha (GP1BA) receptor on platelets alone results in inhibition of platelet aggregation, while binding to both GP1BA receptor and IgMk promotes platelet aggregation and signal transduction. This Echis carinatus (Saw-scaled viper) protein is Snaclec echicetin subunit alpha.